The primary structure comprises 466 residues: MSWKGFTKALARTPQTLRSKFNVGEITKDPIYEDAGRRFKSLETEAKKLAEDAKKYTDAINGLLNHQIGFADACIEIYKPISGRASDPESYEQEGNAEGIEAAEAYKEIVYDLQKNLASEMDVINTRIVNPTGELLKIVKDVDKLLLKRDHKQLDYDRHRSSFKKLQEKKDKSLKDEKKLYEAETAFEQSSQEYEYYNEMLKEELPKLFALAQSFIAPLFQGFYYMQLNVYYVLYEKMSHCEIQYFDFNTDILESYERRRGDVKDRAEALTITKFKTAKPTYKRPGMGPGGKDATASSSSSFSSKREEAAAEPSSSTATDIPPPYSTPSVAGASDYSTPSAGYQTVQTTTTTTEAAAAQYPQAAFPPPPVMPQPAAAAVTTPVAAPVAAAAAAVPVPPPAPAPAAAPAAEHVVALYDYAAQAAGDLSFHAGDRIEVVSRTDNQNEWWIGRLNGAQGQFPGNYVQLE.

Residues 17 to 269 (LRSKFNVGEI…RGDVKDRAEA (253 aa)) enclose the BAR domain. Coiled-coil stretches lie at residues 31-67 (IYED…LNHQ) and 177-204 (EKKL…LKEE). The tract at residues 280–342 (PTYKRPGMGP…ASDYSTPSAG (63 aa)) is disordered. The segment covering 294–303 (ATASSSSSFS) has biased composition (low complexity). A phosphoserine mark is found at S298, S299, S301, and S303. The SH3 domain occupies 407–466 (PAAEHVVALYDYAAQAAGDLSFHAGDRIEVVSRTDNQNEWWIGRLNGAQGQFPGNYVQLE).

Its function is as follows. Has a role in DNA damage signaling as a part of stress response processes. The sequence is that of Protein hob1 (hob1) from Schizosaccharomyces pombe (strain 972 / ATCC 24843) (Fission yeast).